We begin with the raw amino-acid sequence, 545 residues long: Chaperonin GroEL (545 aa).

Residues 29–32 (TLGP), 86–90 (DGTTT), G413, 476–478 (NAA), and D492 each bind ATP.

Belongs to the chaperonin (HSP60) family. In terms of assembly, forms a cylinder of 14 subunits composed of two heptameric rings stacked back-to-back. Interacts with the co-chaperonin GroES.

The protein localises to the cytoplasm. It catalyses the reaction ATP + H2O + a folded polypeptide = ADP + phosphate + an unfolded polypeptide.. Its function is as follows. Together with its co-chaperonin GroES, plays an essential role in assisting protein folding. The GroEL-GroES system forms a nano-cage that allows encapsulation of the non-native substrate proteins and provides a physical environment optimized to promote and accelerate protein folding. In Shouchella clausii (strain KSM-K16) (Alkalihalobacillus clausii), this protein is Chaperonin GroEL.